Consider the following 175-residue polypeptide: Transcription factor HES-3 (175 aa).

The 49-residue stretch at 1-49 folds into the bHLH domain; that stretch reads MEKKRRARINLSLEQLRSLLERHYSHQIRKRKLEKADILELSVKYVRSL. Residues 65–98 form the Orange domain; it reads YPSGFRGGLPGSSQRLRPGEDDSGLRCPLLLQRR. The segment covering 124 to 145 has biased composition (low complexity); the sequence is PGPPAGGSQSPQSPFPPLGGLL. The disordered stretch occupies residues 124–175; the sequence is PGPPAGGSQSPQSPFPPLGGLLESSTGILAPPPASNCQAENPRPGFRVWRPW. Residues 172 to 175 carry the WRPW motif motif; the sequence is WRPW.

In terms of assembly, transcription repression requires formation of a complex with a corepressor protein of the Groucho/TLE family. Expressed exclusively in Purkinje cells.

It is found in the nucleus. Its function is as follows. Transcriptional repressor of genes that require a bHLH protein for their transcription. The sequence is that of Transcription factor HES-3 (Hes3) from Rattus norvegicus (Rat).